A 208-amino-acid polypeptide reads, in one-letter code: Putative 3-methyladenine DNA glycosylase (208 aa).

It belongs to the DNA glycosylase MPG family.

The polypeptide is Putative 3-methyladenine DNA glycosylase (Nitrobacter winogradskyi (strain ATCC 25391 / DSM 10237 / CIP 104748 / NCIMB 11846 / Nb-255)).